The primary structure comprises 215 residues: Probable nicotinate-nucleotide adenylyltransferase (215 aa).

It belongs to the NadD family.

The catalysed reaction is nicotinate beta-D-ribonucleotide + ATP + H(+) = deamido-NAD(+) + diphosphate. Its pathway is cofactor biosynthesis; NAD(+) biosynthesis; deamido-NAD(+) from nicotinate D-ribonucleotide: step 1/1. Catalyzes the reversible adenylation of nicotinate mononucleotide (NaMN) to nicotinic acid adenine dinucleotide (NaAD). This chain is Probable nicotinate-nucleotide adenylyltransferase, found in Gluconacetobacter diazotrophicus (strain ATCC 49037 / DSM 5601 / CCUG 37298 / CIP 103539 / LMG 7603 / PAl5).